The chain runs to 218 residues: tRNA (guanine-N(7)-)-methyltransferase (218 aa).

Positions 45, 70, 97, and 119 each coordinate S-adenosyl-L-methionine. Asp-119 is a catalytic residue. Lys-123 provides a ligand contact to substrate. The interval 125–130 is interaction with RNA; it reads RHEKRR. Substrate is bound by residues Asp-155 and 195–198; that span reads TEYE.

Belongs to the class I-like SAM-binding methyltransferase superfamily. TrmB family.

The catalysed reaction is guanosine(46) in tRNA + S-adenosyl-L-methionine = N(7)-methylguanosine(46) in tRNA + S-adenosyl-L-homocysteine. It participates in tRNA modification; N(7)-methylguanine-tRNA biosynthesis. Its function is as follows. Catalyzes the formation of N(7)-methylguanine at position 46 (m7G46) in tRNA. This is tRNA (guanine-N(7)-)-methyltransferase from Lactobacillus acidophilus (strain ATCC 700396 / NCK56 / N2 / NCFM).